The following is a 306-amino-acid chain: Ubiquitin carboxyl-terminal hydrolase RPN11 (306 aa).

M1 carries the N-acetylmethionine modification. The disordered stretch occupies residues 1-20; it reads MERLQRLMMNSKVGSADTGR. Residues 27 to 162 form the MPN domain; the sequence is VYISSIALLK…IDAFRLIDTG (136 aa). Zn(2+) contacts are provided by H109, H111, and D122. Residues 109–122 carry the JAMM motif motif; the sequence is HSHPGFGCWLSSVD.

It belongs to the peptidase M67A family. As to quaternary structure, component of the lid subcomplex of the 19S proteasome regulatory particle complex (also named PA700 complex). The 26S proteasome consists of a 20S proteasome core and two 19S regulatory subunits. Interacts directly with RPN8 and STS1. In terms of processing, N-acetylated by NAT3.

The catalysed reaction is Thiol-dependent hydrolysis of ester, thioester, amide, peptide and isopeptide bonds formed by the C-terminal Gly of ubiquitin (a 76-residue protein attached to proteins as an intracellular targeting signal).. Component of the lid subcomplex of the 26S proteasome, a multiprotein complex involved in the ATP-dependent degradation of ubiquitinated proteins. RPN11 is the only catalytically active member of the lid and serves as the essential deubiquitinase of the proteasome. In Saccharomyces cerevisiae (strain ATCC 204508 / S288c) (Baker's yeast), this protein is Ubiquitin carboxyl-terminal hydrolase RPN11 (RPN11).